The chain runs to 185 residues: Thymidine kinase (185 aa).

Residues glycine 10 to threonine 17 and aspartate 83 to glutamine 86 contribute to the ATP site. Glutamate 84 functions as the Proton acceptor in the catalytic mechanism. 4 residues coordinate Zn(2+): cysteine 140, cysteine 143, cysteine 173, and cysteine 176.

The protein belongs to the thymidine kinase family. In terms of assembly, homotetramer.

It is found in the cytoplasm. It carries out the reaction thymidine + ATP = dTMP + ADP + H(+). The sequence is that of Thymidine kinase from Pseudothermotoga lettingae (strain ATCC BAA-301 / DSM 14385 / NBRC 107922 / TMO) (Thermotoga lettingae).